Consider the following 188-residue polypeptide: GMP synthase [glutamine-hydrolyzing] subunit A (188 aa).

The Glutamine amidotransferase type-1 domain occupies lysine 2–lysine 188. Residue cysteine 79 is the Nucleophile of the active site. Catalysis depends on residues histidine 166 and glutamate 168.

Heterodimer composed of a glutamine amidotransferase subunit (A) and a GMP-binding subunit (B).

It catalyses the reaction XMP + L-glutamine + ATP + H2O = GMP + L-glutamate + AMP + diphosphate + 2 H(+). It participates in purine metabolism; GMP biosynthesis; GMP from XMP (L-Gln route): step 1/1. Catalyzes the synthesis of GMP from XMP. In Sulfurisphaera tokodaii (strain DSM 16993 / JCM 10545 / NBRC 100140 / 7) (Sulfolobus tokodaii), this protein is GMP synthase [glutamine-hydrolyzing] subunit A.